Here is a 240-residue protein sequence, read N- to C-terminus: uncharacterized protein (240 aa).

Polar residues predominate over residues 197–210; that stretch reads PLKSHSASRLNHLT. The tract at residues 197 to 222 is disordered; sequence PLKSHSASRLNHLTPSPRPGETPLEN.

This is an uncharacterized protein from Caenorhabditis elegans.